The sequence spans 199 residues: Inosine triphosphate pyrophosphatase (199 aa).

12-17 (TGNAKK) provides a ligand contact to ITP. Position 42 (Glu-42) interacts with Mg(2+). ITP contacts are provided by residues Lys-54, 70–71 (DT), Lys-87, 146–149 (FGWD), Lys-169, and 174–175 (HR).

Belongs to the HAM1 NTPase family. In terms of assembly, homodimer. Requires Mg(2+) as cofactor. Mn(2+) is required as a cofactor.

Its subcellular location is the cytoplasm. It carries out the reaction ITP + H2O = IMP + diphosphate + H(+). It catalyses the reaction dITP + H2O = dIMP + diphosphate + H(+). The catalysed reaction is XTP + H2O = XMP + diphosphate + H(+). In terms of biological role, pyrophosphatase that hydrolyzes non-canonical purine nucleotides such as inosine triphosphate (ITP), deoxyinosine triphosphate (dITP) or xanthosine 5'-triphosphate (XTP) to their respective monophosphate derivatives. The enzyme does not distinguish between the deoxy- and ribose forms. Probably excludes non-canonical purines from RNA and DNA precursor pools, thus preventing their incorporation into RNA and DNA and avoiding chromosomal lesions. The polypeptide is Inosine triphosphate pyrophosphatase (Monosiga brevicollis (Choanoflagellate)).